We begin with the raw amino-acid sequence, 622 residues long: Polypeptide N-acetylgalactosaminyltransferase 6 (622 aa).

The Cytoplasmic portion of the chain corresponds to 1-8; sequence MRLLRRRH. The chain crosses the membrane as a helical; Signal-anchor for type II membrane protein span at residues 9–28; that stretch reads MSLRLAMLGSVFMLFLFIRQ. Over 29–622 the chain is Lumenal; sequence KDVSNQEQAM…RDPYQLWLFV (594 aa). N-linked (GlcNAc...) asparagine glycosylation is present at Asn-86. The catalytic subdomain A stretch occupies residues 176 to 285; the sequence is LPTTSVIIVF…HGWLEPLLAR (110 aa). Mn(2+)-binding residues include Asp-269, His-271, and His-407. The tract at residues 348 to 410 is catalytic subdomain B; it reads PIKSPTFAGG…PCSVVGHVFR (63 aa). Residue Asn-476 is glycosylated (N-linked (GlcNAc...) asparagine). Residues 506–622 form the Ricin B-type lectin domain; that stretch reads TNQCLDVGEN…RDPYQLWLFV (117 aa). A disulfide bridge connects residues Cys-509 and Cys-527. Positions 511, 514, 528, and 533 each coordinate UDP-N-acetyl-alpha-D-galactosamine. Intrachain disulfides connect Cys-553–Cys-566 and Cys-597–Cys-610.

The protein belongs to the glycosyltransferase 2 family. GalNAc-T subfamily. Mn(2+) serves as cofactor.

The protein localises to the golgi apparatus membrane. The catalysed reaction is L-seryl-[protein] + UDP-N-acetyl-alpha-D-galactosamine = a 3-O-[N-acetyl-alpha-D-galactosaminyl]-L-seryl-[protein] + UDP + H(+). It carries out the reaction L-threonyl-[protein] + UDP-N-acetyl-alpha-D-galactosamine = a 3-O-[N-acetyl-alpha-D-galactosaminyl]-L-threonyl-[protein] + UDP + H(+). Its pathway is protein modification; protein glycosylation. Functionally, catalyzes the initial reaction in O-linked oligosaccharide biosynthesis, the transfer of an N-acetyl-D-galactosamine residue to a serine or threonine residue on the protein receptor. May participate in synthesis of oncofetal fibronectin. Has activity toward Muc1a, Muc2, EA2 and fibronectin peptides. The protein is Polypeptide N-acetylgalactosaminyltransferase 6 (Galnt6) of Mus musculus (Mouse).